The chain runs to 535 residues: uncharacterized protein (535 aa).

Residues 8–24 (LVVFGSLVFFFGLVKYF) form a helical membrane-spanning segment. A Glycyl lysine isopeptide (Lys-Gly) (interchain with G-Cter in ubiquitin) cross-link involves residue Lys-50. Positions 316, 327, 412, 452, and 493 each coordinate Mn(2+).

This sequence belongs to the peptidase M24B family. The cofactor is Mn(2+).

The protein localises to the membrane. This is an uncharacterized protein from Saccharomyces cerevisiae (strain ATCC 204508 / S288c) (Baker's yeast).